A 389-amino-acid chain; its full sequence is Sterol methyltransferase-like 1 (389 aa).

Residues 25–45 traverse the membrane as a helical segment; the sequence is IAAGVTAAVVIGGYIWIITEL.

The protein belongs to the class I-like SAM-binding methyltransferase superfamily. Erg6/SMT family.

The protein localises to the microsome membrane. In terms of biological role, unable to convert squalene, botryococcene, cycloartenol, zymosterol or lanosterol to mono-, di-, tri- or tetramethylated derivatives. The sequence is that of Sterol methyltransferase-like 1 (SMT-1) from Botryococcus braunii (Green alga).